The chain runs to 1435 residues: Gag-Pol polyprotein (1435 aa).

A lipid anchor (N-myristoyl glycine; by host) is attached at glycine 2. The segment at 7–31 is interaction with Gp41; it reads VLSGGELDKWEKIRLRPGGKKQYKL. Residues 8–43 are interaction with host CALM1; sequence LSGGELDKWEKIRLRPGGKKQYKLKHIVWASRELER. An interaction with host AP3D1 region spans residues 12–19; that stretch reads ELDKWEKI. Residues 14–33 form an interaction with membrane phosphatidylinositol 4,5-bisphosphate and RNA region; that stretch reads DKWEKIRLRPGGKKQYKLKH. Residues 16–22 carry the Nuclear export signal motif; the sequence is WEKIRLR. The short motif at 26–32 is the Nuclear localization signal element; that stretch reads KKQYKLK. Residues 73 to 77 form an interaction with membrane phosphatidylinositol 4,5-bisphosphate region; it reads EELRS. The interval 106–128 is disordered; the sequence is EEQNKSKKKAQQAAADTGNNSQV. Tyrosine 132 bears the Phosphotyrosine; by host mark. Position 148 is a phosphoserine; by host MAPK1 (serine 148). Residues 189–227 form an interaction with human PPIA/CYPA and NUP153 region; the sequence is NTVGGHQAAMQMLKETINEEAAEWDRLHPVHAGPIAPGQ. The tract at residues 277–363 is dimerization/Multimerization of capsid protein p24; that stretch reads YSPTSILDIR…GGPGHKARVL (87 aa). 2 CCHC-type zinc fingers span residues 390–407 and 411–428; these read VKCFNCGKEGHIAKNCRA and KGCWKCGKEGHQMKDCTE. The tract at residues 444–464 is disordered; the sequence is KAREFSSEQTRANSPTRRELQ. The tract at residues 489–493 is dimerization of protease; it reads PQITL. A Peptidase A2 domain is found at 508–577; the sequence is KEALLDTGAD…TPVNIIGRNL (70 aa). The active-site For protease activity; shared with dimeric partner is the aspartate 513. 2 dimerization of protease regions span residues 537–543 and 576–588; these read GIGGFIK and NLLTQIGCTLNFP. The Reverse transcriptase domain maps to 631–821; it reads EGKISKIGPE…PPFLWMGYEL (191 aa). Mg(2+) is bound by residues aspartate 697, aspartate 772, and aspartate 773. Residues 814–822 form an RT 'primer grip' region; sequence FLWMGYELH. The short motif at 985-1001 is the Tryptophan repeat motif element; sequence WEAWWTEYWQATWIPEW. The RNase H type-1 domain occupies 1021–1144; that stretch reads IIGAETFYVD…VDGLVSAGIR (124 aa). 4 residues coordinate Mg(2+): aspartate 1030, glutamate 1065, aspartate 1085, and aspartate 1136. An Integrase-type zinc finger spans residues 1150–1191; that stretch reads DGIDKAQEEHEKYHSNWRAMASDFNLPPVVAKEIVASCDKCQ. Positions 1159, 1163, 1187, and 1190 each coordinate Zn(2+). One can recognise an Integrase catalytic domain in the interval 1201–1351; it reads VDCSPGIWQL…SAGERIVDII (151 aa). Mg(2+) contacts are provided by aspartate 1211, aspartate 1263, and glutamate 1299. A DNA-binding region (integrase-type) is located at residues 1370-1417; it reads FRVYYRDSRDPVWKGPAKLLWKGEGAVVIQDNSDIKVVPRRKAKIIRD.

In terms of assembly, homotrimer; further assembles as hexamers of trimers. Matrix protein p17: Interacts with gp41 (via C-terminus). Interacts with host CALM1; this interaction induces a conformational change in the Matrix protein, triggering exposure of the myristate group. Interacts with host AP3D1; this interaction allows the polyprotein trafficking to multivesicular bodies during virus assembly. Part of the pre-integration complex (PIC) which is composed of viral genome, matrix protein, Vpr and integrase. As to quaternary structure, homodimer; the homodimer further multimerizes as homohexamers or homopentamers. Interacts with human PPIA/CYPA; This interaction stabilizes the capsid. Interacts with human NUP153. Interacts with host PDZD8; this interaction stabilizes the capsid. Interacts with monkey TRIM5; this interaction destabilizes the capsid. Homodimer, whose active site consists of two apposed aspartic acid residues. In terms of assembly, heterodimer of p66 RT and p51 RT (RT p66/p51). Heterodimerization of RT is essential for DNA polymerase activity. The overall folding of the subdomains is similar in p66 RT and p51 RT but the spatial arrangements of the subdomains are dramatically different. As to quaternary structure, homotetramer; may further associate as a homohexadecamer. Part of the pre-integration complex (PIC) which is composed of viral genome, matrix protein, Vpr and integrase. Interacts with human SMARCB1/INI1 and human PSIP1/LEDGF isoform 1. Interacts with human KPNA3; this interaction might play a role in nuclear import of the pre-integration complex. Interacts with human NUP153; this interaction might play a role in nuclear import of the pre-integration complex. Requires Mg(2+) as cofactor. Specific enzymatic cleavages by the viral protease yield mature proteins. The protease is released by autocatalytic cleavage. The polyprotein is cleaved during and after budding, this process is termed maturation. Proteolytic cleavage of p66 RT removes the RNase H domain to yield the p51 RT subunit. Nucleocapsid protein p7 might be further cleaved after virus entry. Post-translationally, tyrosine phosphorylated presumably in the virion by a host kinase. Phosphorylation is apparently not a major regulator of membrane association. In terms of processing, phosphorylated possibly by host MAPK1; this phosphorylation is necessary for Pin1-mediated virion uncoating. Methylated by host PRMT6, impairing its function by reducing RNA annealing and the initiation of reverse transcription.

It localises to the host cell membrane. The protein localises to the host endosome. It is found in the host multivesicular body. The protein resides in the virion membrane. Its subcellular location is the host nucleus. It localises to the host cytoplasm. The protein localises to the virion. It catalyses the reaction Specific for a P1 residue that is hydrophobic, and P1' variable, but often Pro.. The catalysed reaction is Endohydrolysis of RNA in RNA/DNA hybrids. Three different cleavage modes: 1. sequence-specific internal cleavage of RNA. Human immunodeficiency virus type 1 and Moloney murine leukemia virus enzymes prefer to cleave the RNA strand one nucleotide away from the RNA-DNA junction. 2. RNA 5'-end directed cleavage 13-19 nucleotides from the RNA end. 3. DNA 3'-end directed cleavage 15-20 nucleotides away from the primer terminus.. The enzyme catalyses 3'-end directed exonucleolytic cleavage of viral RNA-DNA hybrid.. It carries out the reaction DNA(n) + a 2'-deoxyribonucleoside 5'-triphosphate = DNA(n+1) + diphosphate. Protease: The viral protease is inhibited by many synthetic protease inhibitors (PIs), such as amprenavir, atazanavir, indinavir, loprinavir, nelfinavir, ritonavir and saquinavir. Use of protease inhibitors in tritherapy regimens permit more ambitious therapeutic strategies. Reverse transcriptase/ribonuclease H: RT can be inhibited either by nucleoside RT inhibitors (NRTIs) or by non nucleoside RT inhibitors (NNRTIs). NRTIs act as chain terminators, whereas NNRTIs inhibit DNA polymerization by binding a small hydrophobic pocket near the RT active site and inducing an allosteric change in this region. Classical NRTIs are abacavir, adefovir (PMEA), didanosine (ddI), lamivudine (3TC), stavudine (d4T), tenofovir (PMPA), zalcitabine (ddC), and zidovudine (AZT). Classical NNRTIs are atevirdine (BHAP U-87201E), delavirdine, efavirenz (DMP-266), emivirine (I-EBU), and nevirapine (BI-RG-587). The tritherapies used as a basic effective treatment of AIDS associate two NRTIs and one NNRTI. Mediates, with Gag polyprotein, the essential events in virion assembly, including binding the plasma membrane, making the protein-protein interactions necessary to create spherical particles, recruiting the viral Env proteins, and packaging the genomic RNA via direct interactions with the RNA packaging sequence (Psi). Gag-Pol polyprotein may regulate its own translation, by the binding genomic RNA in the 5'-UTR. At low concentration, the polyprotein would promote translation, whereas at high concentration, the polyprotein would encapsidate genomic RNA and then shut off translation. In terms of biological role, targets the polyprotein to the plasma membrane via a multipartite membrane-binding signal, that includes its myristoylated N-terminus. Matrix protein is part of the pre-integration complex. Implicated in the release from host cell mediated by Vpu. Binds to RNA. Its function is as follows. Forms the conical core that encapsulates the genomic RNA-nucleocapsid complex in the virion. Most core are conical, with only 7% tubular. The core is constituted by capsid protein hexamer subunits. The core is disassembled soon after virion entry. Host restriction factors such as TRIM5-alpha or TRIMCyp bind retroviral capsids and cause premature capsid disassembly, leading to blocks in reverse transcription. Capsid restriction by TRIM5 is one of the factors which restricts HIV-1 to the human species. Host PIN1 apparently facilitates the virion uncoating. On the other hand, interactions with PDZD8 or CYPA stabilize the capsid. Functionally, encapsulates and protects viral dimeric unspliced genomic RNA (gRNA). Binds these RNAs through its zinc fingers. Acts as a nucleic acid chaperone which is involved in rearangement of nucleic acid secondary structure during gRNA retrotranscription. Also facilitates template switch leading to recombination. As part of the polyprotein, participates in gRNA dimerization, packaging, tRNA incorporation and virion assembly. Aspartyl protease that mediates proteolytic cleavages of Gag and Gag-Pol polyproteins during or shortly after the release of the virion from the plasma membrane. Cleavages take place as an ordered, step-wise cascade to yield mature proteins. This process is called maturation. Displays maximal activity during the budding process just prior to particle release from the cell. Also cleaves Nef and Vif, probably concomitantly with viral structural proteins on maturation of virus particles. Hydrolyzes host EIF4GI and PABP1 in order to shut off the capped cellular mRNA translation. The resulting inhibition of cellular protein synthesis serves to ensure maximal viral gene expression and to evade host immune response. Also mediates cleavage of host YTHDF3. Mediates cleavage of host CARD8, thereby activating the CARD8 inflammasome, leading to the clearance of latent HIV-1 in patient CD4(+) T-cells after viral reactivation; in contrast, HIV-1 can evade CARD8-sensing when its protease remains inactive in infected cells prior to viral budding. In terms of biological role, multifunctional enzyme that converts the viral RNA genome into dsDNA in the cytoplasm, shortly after virus entry into the cell. This enzyme displays a DNA polymerase activity that can copy either DNA or RNA templates, and a ribonuclease H (RNase H) activity that cleaves the RNA strand of RNA-DNA heteroduplexes in a partially processive 3' to 5' endonucleasic mode. Conversion of viral genomic RNA into dsDNA requires many steps. A tRNA(3)-Lys binds to the primer-binding site (PBS) situated at the 5'-end of the viral RNA. RT uses the 3' end of the tRNA primer to perform a short round of RNA-dependent minus-strand DNA synthesis. The reading proceeds through the U5 region and ends after the repeated (R) region which is present at both ends of viral RNA. The portion of the RNA-DNA heteroduplex is digested by the RNase H, resulting in a ssDNA product attached to the tRNA primer. This ssDNA/tRNA hybridizes with the identical R region situated at the 3' end of viral RNA. This template exchange, known as minus-strand DNA strong stop transfer, can be either intra- or intermolecular. RT uses the 3' end of this newly synthesized short ssDNA to perform the RNA-dependent minus-strand DNA synthesis of the whole template. RNase H digests the RNA template except for two polypurine tracts (PPTs) situated at the 5'-end and near the center of the genome. It is not clear if both polymerase and RNase H activities are simultaneous. RNase H probably can proceed both in a polymerase-dependent (RNA cut into small fragments by the same RT performing DNA synthesis) and a polymerase-independent mode (cleavage of remaining RNA fragments by free RTs). Secondly, RT performs DNA-directed plus-strand DNA synthesis using the PPTs that have not been removed by RNase H as primers. PPTs and tRNA primers are then removed by RNase H. The 3' and 5' ssDNA PBS regions hybridize to form a circular dsDNA intermediate. Strand displacement synthesis by RT to the PBS and PPT ends produces a blunt ended, linear dsDNA copy of the viral genome that includes long terminal repeats (LTRs) at both ends. Its function is as follows. Catalyzes viral DNA integration into the host chromosome, by performing a series of DNA cutting and joining reactions. This enzyme activity takes place after virion entry into a cell and reverse transcription of the RNA genome in dsDNA. The first step in the integration process is 3' processing. This step requires a complex comprising the viral genome, matrix protein, Vpr and integrase. This complex is called the pre-integration complex (PIC). The integrase protein removes 2 nucleotides from each 3' end of the viral DNA, leaving recessed CA OH's at the 3' ends. In the second step, the PIC enters cell nucleus. This process is mediated through integrase and Vpr proteins, and allows the virus to infect a non dividing cell. This ability to enter the nucleus is specific of lentiviruses, other retroviruses cannot and rely on cell division to access cell chromosomes. In the third step, termed strand transfer, the integrase protein joins the previously processed 3' ends to the 5' ends of strands of target cellular DNA at the site of integration. The 5'-ends are produced by integrase-catalyzed staggered cuts, 5 bp apart. A Y-shaped, gapped, recombination intermediate results, with the 5'-ends of the viral DNA strands and the 3' ends of target DNA strands remaining unjoined, flanking a gap of 5 bp. The last step is viral DNA integration into host chromosome. This involves host DNA repair synthesis in which the 5 bp gaps between the unjoined strands are filled in and then ligated. Since this process occurs at both cuts flanking the HIV genome, a 5 bp duplication of host DNA is produced at the ends of HIV-1 integration. Alternatively, Integrase may catalyze the excision of viral DNA just after strand transfer, this is termed disintegration. In Human immunodeficiency virus type 1 group M subtype B (isolate NY5) (HIV-1), this protein is Gag-Pol polyprotein (gag-pol).